A 791-amino-acid chain; its full sequence is Phenylalanine--tRNA ligase beta subunit (791 aa).

Positions 39–147 (GDALGQVVVA…DDAPVGQALA (109 aa)) constitute a tRNA-binding domain. The 76-residue stretch at 400–475 (PQPASILLRR…RIHGYDRVPT (76 aa)) folds into the B5 domain. 4 residues coordinate Mg(2+): aspartate 453, aspartate 459, glutamate 462, and glutamate 463. Residues 697 to 790 (SRYPSMRRDL…IEREHRARIR (94 aa)) enclose the FDX-ACB domain.

The protein belongs to the phenylalanyl-tRNA synthetase beta subunit family. Type 1 subfamily. As to quaternary structure, tetramer of two alpha and two beta subunits. Mg(2+) is required as a cofactor.

The protein resides in the cytoplasm. The catalysed reaction is tRNA(Phe) + L-phenylalanine + ATP = L-phenylalanyl-tRNA(Phe) + AMP + diphosphate + H(+). This chain is Phenylalanine--tRNA ligase beta subunit, found in Xanthomonas campestris pv. campestris (strain 8004).